Reading from the N-terminus, the 85-residue chain is MRLHFNTSNGIFSVRREDRSTAVASERNAKLPLIGSVVPLSPRVHLLITRGEFIKAMNKERPHLEAVVTYWPRIRLFVKLIKEVL.

This is an uncharacterized protein from Enterobacteria phage T3 (Bacteriophage T3).